The sequence spans 77 residues: Mu-conotoxin BuIIIA (77 aa).

The N-terminal stretch at 1–22 is a signal peptide; that stretch reads MMSKLGVLLTICLLLFPLFALP. Positions 23–51 are excised as a propeptide; sequence QDGDQPADRPAERMQDDISSEQNSLLEKR. The disordered stretch occupies residues 26–46; the sequence is DQPADRPAERMQDDISSEQNS. Positions 28–38 are enriched in basic and acidic residues; sequence PADRPAERMQD. 3 cysteine pairs are disulfide-bonded: Cys-56–Cys-67, Cys-57–Cys-73, and Cys-63–Cys-74. Cys-74 carries the cysteine amide modification.

It belongs to the conotoxin M superfamily. Expressed by the venom duct.

Its subcellular location is the secreted. Mu-conotoxins block voltage-gated sodium channels (Nav). This synthetic toxin potently blocks rNav1.2/SCN2A, and rNav1.4/SCN4A. It also moderately blocks rNav1.1/SCN1A, rNav1.3/SCN3A, rNav1.5/SCN5A, and mNav1.6/SCN8A. The inhibition is reversible. This is Mu-conotoxin BuIIIA from Conus bullatus (Bubble cone).